The primary structure comprises 100 residues: MAKKSLIYREKKRQKLEEKYHLIRRSSKKEISQIPSLSEKWKIHGKLQSPPRNSAPTRLHRRCFSTGRPRANYRDFGLSGHILREMVHACLLPGATRSSW.

It belongs to the universal ribosomal protein uS14 family. Part of the 30S ribosomal subunit.

It localises to the plastid. The protein resides in the chloroplast. In terms of biological role, binds 16S rRNA, required for the assembly of 30S particles. The protein is Small ribosomal subunit protein uS14c of Aethionema grandiflorum (Persian stone-cress).